Here is an 872-residue protein sequence, read N- to C-terminus: DNA mismatch repair protein MutS (872 aa).

Position 622-629 (622-629) interacts with ATP; that stretch reads GPNMAGKS.

Belongs to the DNA mismatch repair MutS family.

In terms of biological role, this protein is involved in the repair of mismatches in DNA. It is possible that it carries out the mismatch recognition step. This protein has a weak ATPase activity. This chain is DNA mismatch repair protein MutS, found in Geobacter metallireducens (strain ATCC 53774 / DSM 7210 / GS-15).